The chain runs to 159 residues: Large ribosomal subunit protein bL17 (159 aa).

A compositionally biased stretch (low complexity) spans 124 to 135; the sequence is EANRATRAAASK. Residues 124-159 are disordered; the sequence is EANRATRAAASKQAEEAKAEEAEATEAEAEETTEEK. Residues 145–159 show a composition bias toward acidic residues; the sequence is AEATEAEAEETTEEK.

This sequence belongs to the bacterial ribosomal protein bL17 family. As to quaternary structure, part of the 50S ribosomal subunit. Contacts protein L32.

This Corynebacterium aurimucosum (strain ATCC 700975 / DSM 44827 / CIP 107346 / CN-1) (Corynebacterium nigricans) protein is Large ribosomal subunit protein bL17.